A 37-amino-acid chain; its full sequence is uncharacterized protein (37 aa).

This is an uncharacterized protein from Bacillus caldotenax.